The chain runs to 442 residues: Ribulose bisphosphate carboxylase/oxygenase activase 1, chloroplastic (442 aa).

The transit peptide at M1–V58 directs the protein to the chloroplast. G169–S176 provides a ligand contact to ATP.

This sequence belongs to the RuBisCO activase family.

It localises to the plastid. Its subcellular location is the chloroplast stroma. Functionally, activation of RuBisCO (ribulose-1,5-bisphosphate carboxylase/oxygenase; EC 4.1.1.39) involves the ATP-dependent carboxylation of the epsilon-amino group of lysine leading to a carbamate structure. This is Ribulose bisphosphate carboxylase/oxygenase activase 1, chloroplastic from Nicotiana tabacum (Common tobacco).